Here is a 315-residue protein sequence, read N- to C-terminus: Ferrochelatase (315 aa).

H193 and E273 together coordinate Fe cation.

The protein belongs to the ferrochelatase family.

The protein resides in the cytoplasm. It catalyses the reaction heme b + 2 H(+) = protoporphyrin IX + Fe(2+). It functions in the pathway porphyrin-containing compound metabolism; protoheme biosynthesis; protoheme from protoporphyrin-IX: step 1/1. Its function is as follows. Catalyzes the ferrous insertion into protoporphyrin IX. The chain is Ferrochelatase from Wolbachia sp. subsp. Drosophila simulans (strain wRi).